A 354-amino-acid polypeptide reads, in one-letter code: Protein RecA (354 aa).

Residue glycine 67–threonine 74 coordinates ATP.

Belongs to the RecA family.

The protein resides in the cytoplasm. Its function is as follows. Can catalyze the hydrolysis of ATP in the presence of single-stranded DNA, the ATP-dependent uptake of single-stranded DNA by duplex DNA, and the ATP-dependent hybridization of homologous single-stranded DNAs. It interacts with LexA causing its activation and leading to its autocatalytic cleavage. The chain is Protein RecA from Chlamydia muridarum (strain MoPn / Nigg).